The following is a 1531-amino-acid chain: Nuclear factor of activated T-cells 5 (1531 aa).

Disordered stretches follow at residues 34–89 (ELQL…TSSS) and 114–141 (VSNR…RHTV). Residues 41–51 (RETSVASMSQT) show a composition bias toward polar residues. Residues 63–89 (VVAADASSAPSSSSMGGACSSFTTSSS) are compositionally biased toward low complexity. S120 carries the post-translational modification Phosphoserine. Residue K122 is modified to N6-acetyllysine. The segment covering 122–134 (KQLTSNTVQQHPS) has biased composition (polar residues). Phosphoserine is present on S134. T135 is modified (phosphothreonine; by CDK5). S155 is subject to Phosphoserine. Disordered stretches follow at residues 175 to 220 (WMED…CEES) and 241 to 265 (TTDN…GVKK). The span at 179–192 (SPSNFSNMSTSSYN) shows a compositional bias: low complexity. Residues 200–212 (KSRKRNPKQRPGV) show a composition bias toward basic residues. The segment covering 241-260 (TTDNKGNSKAGNGTLENQKG) has biased composition (polar residues). The RHD domain maps to 264–443 (KKSPMLCGQY…SPILCTQPAG (180 aa)). Residues 293–300 (RARYLTEG) mediate DNA binding. Residue K556 forms a Glycyl lysine isopeptide (Lys-Gly) (interchain with G-Cter in SUMO1); alternate linkage. A Glycyl lysine isopeptide (Lys-Gly) (interchain with G-Cter in SUMO2); alternate cross-link involves residue K556. The residue at position 561 (S561) is a Phosphoserine. Residues K573 and K603 each participate in a glycyl lysine isopeptide (Lys-Gly) (interchain with G-Cter in SUMO2) cross-link. Disordered regions lie at residues 640–666 (NIAG…QQIQ), 841–891 (VSPG…QVME), 958–996 (PPAV…TGTQ), 1211–1304 (PQVA…QEQQ), 1316–1371 (APMN…QEQQ), and 1473–1502 (ISQP…SPLA). Over residues 646–656 (SFSSPSSSHLP) the composition is skewed to low complexity. 2 stretches are compositionally biased toward polar residues: residues 841-852 (VSPGMFSSTEPT) and 869-878 (HPQSENTLSN). Composition is skewed to low complexity over residues 879–888 (QQQQQQQQQQ) and 960–980 (AVSG…PGTT). 2 stretches are compositionally biased toward polar residues: residues 981 to 996 (MFQT…TGTQ) and 1224 to 1247 (PQSQ…NSPS). The span at 1248–1266 (QEQQQQQQQQQQQQQQQQQ) shows a compositional bias: low complexity. 2 stretches are compositionally biased toward polar residues: residues 1267–1278 (SILFSNQNTMAT) and 1291–1304 (FNPN…QEQQ). The span at 1320 to 1330 (QEQQPMQFQSQ) shows a compositional bias: low complexity. Residues 1331–1371 (STVSSLQNPGPTQSESSQTPLFHSSPQIQLVQGSPSSQEQQ) are compositionally biased toward polar residues. Residues 1475-1486 (QPGQPQNEGQPP) show a composition bias toward low complexity. A compositionally biased stretch (polar residues) spans 1487-1502 (VTTLLSQQMPENSPLA).

In terms of assembly, homodimer when bound to DNA, completely encircles its DNA target. Interacts with CIDEC; this interaction is direct and retains NFAT5 in the cytoplasm. Does not bind with Fos and Jun transcription factors. Interacts with DDX5 and DDX17; this interaction leads to DDX5/DDX17 recruitment to LNC2 and S100A4 promoters and NFAT5-mediated DDX5/DDX17-enhanced transactivation. In terms of processing, phosphorylated. Phosphorylated at Thr-135 by CDK5 in response to osmotic stress; this phosphorylation mediates its rapid nuclear localization. Post-translationally, poly-ADP-ribosylated by PARP1 in response to DNA damage, promoting recruitment to sites of R-loop-associated DNA damage. In terms of tissue distribution, widely expressed, with highest levels in skeletal muscle, brain, heart and peripheral blood leukocytes.

Its subcellular location is the nucleus. It localises to the cytoplasm. The protein resides in the chromosome. Functionally, transcription factor involved, among others, in the transcriptional regulation of osmoprotective and inflammatory genes. Binds the DNA consensus sequence 5'-[ACT][AG]TGGAAA[CAT]A[TA][ATC][CA][ATG][GT][GAC][CG][CT]-3'. Mediates the transcriptional response to hypertonicity. Positively regulates the transcription of LCN2 and S100A4 genes; optimal transactivation of these genes requires the presence of DDX5/DDX17. Also involved in the DNA damage response by preventing formation of R-loops; R-loops are composed of a DNA:RNA hybrid and the associated non-template single-stranded DNA. The protein is Nuclear factor of activated T-cells 5 of Homo sapiens (Human).